Consider the following 294-residue polypeptide: Large ribosomal subunit protein uL2c (294 aa).

Residues 224-249 are disordered; the sequence is VMNPVDHPHGGGGEGKSPIGRSRPVT.

This sequence belongs to the universal ribosomal protein uL2 family. Part of the 50S ribosomal subunit.

The protein localises to the plastid. It is found in the chloroplast. The chain is Large ribosomal subunit protein uL2c (rpl2) from Porphyra purpurea (Red seaweed).